Here is a 458-residue protein sequence, read N- to C-terminus: Adenylosuccinate synthetase (458 aa).

GTP contacts are provided by residues Gly17–Lys23 and Gly45–Thr47. The Proton acceptor role is filled by Asp18. Mg(2+) contacts are provided by Asp18 and Gly45. Residues Asp18–Lys21, Asn43–His46, Thr137, Arg151, Gln247, Thr262, and Arg330 contribute to the IMP site. His46 (proton donor) is an active-site residue. Val326–Arg332 is a substrate binding site. Residues Arg332, Lys358–Asp360, and Ser440–Ser442 each bind GTP.

This sequence belongs to the adenylosuccinate synthetase family. Homodimer. The cofactor is Mg(2+).

Its subcellular location is the cytoplasm. The catalysed reaction is IMP + L-aspartate + GTP = N(6)-(1,2-dicarboxyethyl)-AMP + GDP + phosphate + 2 H(+). It participates in purine metabolism; AMP biosynthesis via de novo pathway; AMP from IMP: step 1/2. In terms of biological role, plays an important role in the de novo pathway of purine nucleotide biosynthesis. Catalyzes the first committed step in the biosynthesis of AMP from IMP. The protein is Adenylosuccinate synthetase of Acidovorax sp. (strain JS42).